A 418-amino-acid chain; its full sequence is AP-3 complex subunit mu-1 (418 aa).

Residues 176–417 (NNEAYFDVVE…VTKAGKFQVR (242 aa)) form the MHD domain.

Belongs to the adaptor complexes medium subunit family. Adaptor protein complex 3 (AP-3) is a heterotetramer composed of two large adaptins (delta-type subunit AP3D1 and beta-type subunit AP3B1 or AP3B2), a medium adaptin (mu-type subunit AP3M1 or AP3M2) and a small adaptin (sigma-type subunit APS1 or AP3S2). Interacts with AGAP1. AP-3 associates with the BLOC-1 complex.

The protein resides in the golgi apparatus. It localises to the cytoplasmic vesicle membrane. Functionally, part of the AP-3 complex, an adaptor-related complex which is not clathrin-associated. The complex is associated with the Golgi region as well as more peripheral structures. It facilitates the budding of vesicles from the Golgi membrane and may be directly involved in trafficking to lysosomes. In concert with the BLOC-1 complex, AP-3 is required to target cargos into vesicles assembled at cell bodies for delivery into neurites and nerve terminals. The sequence is that of AP-3 complex subunit mu-1 (AP3M1) from Bos taurus (Bovine).